Reading from the N-terminus, the 65-residue chain is Large ribosomal subunit protein bL32 (65 aa).

The segment covering 1–19 (MAVQKSRKTPSKRGMRRSH) has biased composition (basic residues). The segment at 1–32 (MAVQKSRKTPSKRGMRRSHNALVKSTLSEDQE) is disordered.

It belongs to the bacterial ribosomal protein bL32 family.

The protein is Large ribosomal subunit protein bL32 of Vesicomyosocius okutanii subsp. Calyptogena okutanii (strain HA).